Reading from the N-terminus, the 365-residue chain is Putative ankyrin repeat protein R903 (365 aa).

ANK repeat units lie at residues 38–67 (NINS…DIRF), 68–97 (QNNE…DIFI), 99–127 (NNFC…KFSN), 129–158 (SKPI…NINK), 184–213 (KFKD…GNIT), 214–243 (VSNN…RFPR), 245–273 (SNEL…SIVD), 275–298 (LLNI…LKNV), 299–328 (NLQK…NPDE), and 330–361 (RTYL…KLQS).

This chain is Putative ankyrin repeat protein R903, found in Acanthamoeba polyphaga mimivirus (APMV).